The sequence spans 244 residues: Transcriptional regulatory protein AruR (244 aa).

The 119-residue stretch at 6 to 124 (RVLVVDDDPV…ELVSRAKNLI (119 aa)) folds into the Response regulatory domain. A 4-aspartylphosphate modification is found at D60. A DNA-binding region (ompR/PhoB-type) is located at residues 139–239 (QALRQFGDWL…IHGAGYLFTA (101 aa)).

Post-translationally, phosphorylated by AruS.

The protein localises to the cytoplasm. Its pathway is amino-acid degradation; L-arginine degradation [regulation]. Member of the two-component regulatory system AruS/AruR, which is involved in the regulation of the arginine transaminase (ATA) pathway in response to exogeneous L-arginine. Regulates transcription of aruH and aruI. The protein is Transcriptional regulatory protein AruR (aruR) of Pseudomonas aeruginosa (strain ATCC 15692 / DSM 22644 / CIP 104116 / JCM 14847 / LMG 12228 / 1C / PRS 101 / PAO1).